We begin with the raw amino-acid sequence, 165 residues long: V-type proton ATPase 16 kDa proteolipid subunit (165 aa).

Residues 1–10 (MSSTFSGDET) lie on the Lumenal side of the membrane. The helical transmembrane segment at 11-33 (APFFGFLGAAAALVFSCMGAAYG) threads the bilayer. Topologically, residues 34 to 55 (TAKSGVGVASMGVMRPELVMKS) are cytoplasmic. Residues 56–76 (IVPVVMAGVLGIYGLIIAVII) traverse the membrane as a helical segment. Topologically, residues 77–95 (STGINPKAKSYYLFDGYAH) are lumenal. The helical transmembrane segment at 96–117 (LSSGLACGLAGLSAGMAIGIVG) threads the bilayer. Residues 118 to 129 (DAGVRANAQQPK) lie on the Cytoplasmic side of the membrane. A helical transmembrane segment spans residues 130–155 (LFVGMILILIFAEALALYGLIVGIIL). The Lumenal segment spans residues 156 to 165 (SSRAGQSRAD).

Belongs to the V-ATPase proteolipid subunit family. In terms of assembly, V-ATPase is a heteromultimeric enzyme composed of a peripheral catalytic V1 complex (main components: subunits A, B, C, D, E, and F) attached to an integral membrane V0 proton pore complex (main component: the proteolipid protein; which is present as a hexamer that forms the proton-conducting pore). In terms of tissue distribution, higher expression in leaves, followed by roots and weakly in flowers. Expression in leaves is light-dependent.

Its subcellular location is the vacuole membrane. Proton-conducting pore forming subunit of the membrane integral V0 complex of vacuolar ATPase. V-ATPase is responsible for acidifying a variety of intracellular compartments in eukaryotic cells. Necessary for the crassulacean acid metabolism. The polypeptide is V-type proton ATPase 16 kDa proteolipid subunit (Kalanchoe daigremontiana (Devil's backbone)).